The chain runs to 361 residues: G-protein coupled receptor 52 (361 aa).

Over 1-44 (MNDSRWTEWRILNTSSGILNVSERHSCPLGFGHYSAVDVCIFET) the chain is Extracellular. Residues Asn-2, Asn-13, and Asn-20 are each glycosylated (N-linked (GlcNAc...) asparagine). Residues 45 to 65 (IVIVLLTFLIIAGNLTVIFVF) traverse the membrane as a helical segment. Topologically, residues 66 to 87 (HCAPLLHHYTTSYFIQTMAYAD) are cytoplasmic. Residues 88-108 (LFVGVSCLVPTLSLLHYSTGI) traverse the membrane as a helical segment. The Extracellular portion of the chain corresponds to 109–115 (HESLTCQ). Cys-114 and Cys-193 form a disulfide bridge. The helical transmembrane segment at 116-136 (VFGYIISVLKSVSMACLACIS) threads the bilayer. Residues 137–159 (VDRYLAITKPLSYNQLVTPCRLR) are Cytoplasmic-facing. Residues 160 to 180 (ICIILIWIYSCLIFLPSFFGW) traverse the membrane as a helical segment. The Extracellular portion of the chain corresponds to 181–200 (GKPGYHGDIFEWCATSWLTS). Residues 201 to 221 (AYFTGFIVCLLYAPAALVVCF) traverse the membrane as a helical segment. The Cytoplasmic portion of the chain corresponds to 222-265 (TYFHIFKICRQHTKEINDRRARFPSHEAAASRDAGHSPDRRYAM). Residues 266–286 (VLFRITSVFYMLWLPYIIYFL) traverse the membrane as a helical segment. Topologically, residues 287-296 (LESSRVLDNP) are extracellular. A helical membrane pass occupies residues 297 to 317 (TLSFLTTWLAISNSFCNCVIY). At 318-361 (SLSNSVFRLGLRRLSETMCTSCMCVKDKEARDPKPRKRANSCSI) the chain is on the cytoplasmic side.

The protein belongs to the G-protein coupled receptor 1 family.

Its subcellular location is the cell membrane. Its function is as follows. G- protein coupled receptor activated by antipsychotics reserpine leading to an increase in intracellular cAMP and its internalization. May play a role in locomotor activity through modulation of dopamine, NMDA and ADORA2A-induced locomotor activity. These behavioral changes are accompanied by modulation of the dopamine receptor signaling pathway in striatum. Modulates HTT level via cAMP-dependent but PKA independent mechanisms throught activation of RAB39B that translocates HTT to the endoplasmic reticulum, thus avoiding proteasome degradation. The protein is G-protein coupled receptor 52 of Bos taurus (Bovine).